A 529-amino-acid polypeptide reads, in one-letter code: MISCKNLCVLRQLPLKNCRRHYSAIQSSAALLSVRPTKWTPKPAAAGGAVSAWQQRTTAKQHQQQQRRSLFSSSRMQAKDYYATLGVAKNANAKDIKKAYYELAKKYHPDTNKDDPDASKKFQDVSEAYEVLSDDQKRREYDTYGQTTENMNRQGAGGAGGFGGGPFGPDGFSQNWQFRSTIDPEELFRKIFGEGNFRSNSFDDFADSKFGFGQAQELVMDLTFAQAARGVNKDVNVNVVDQCPKCAGSKCEPGTKPGRCQYCNGTGFETISTGPFVMRSTCRYCQGTRQYIKYPCAECEGKGQTVQRRKVTVPVPAGIENGQTVRMQVGSKELFVTFRVERSDYFRRDGADVHTDAPISLAQAVLGGTVRVQGVYEDQWLNIEPGTSSHRKIALRGKGLKRVNAHGHGDHYVHIKIEVPKKLSQEQRALLEAYAELEEDTPGQIHGMAQRKDGSKKATAGASETKTDAQPAGRTADSGSQGTSRAGAETESAKGQQSEKSETRRKDQQTGGESGSGGGFLNKIKSMFN.

Residues 1 to 22 (MISCKNLCVLRQLPLKNCRRHY) constitute a mitochondrion transit peptide. Arg-35 carries the post-translational modification Omega-N-methylarginine. In terms of domain architecture, J spans 80–145 (DYYATLGVAK…QKRREYDTYG (66 aa)). The residue at position 121 (Lys-121) is an N6-acetyllysine. The CR-type zinc finger occupies 230–308 (GVNKDVNVNV…CEGKGQTVQR (79 aa)). The Zn(2+) site is built by Cys-243, Cys-246, Cys-260, Cys-263, Cys-282, Cys-285, Cys-296, and Cys-299. The CXXCXGXG motif; approximate repeat unit spans residues 243-250 (CPKCAGSK). Residues 260–267 (CQYCNGTG) form a CXXCXGXG motif repeat. The CXXCXGXG motif; approximate repeat unit spans residues 282–289 (CRYCQGTR). The stretch at 296–303 (CAECEGKG) is one CXXCXGXG motif repeat. The segment at 441-529 (TPGQIHGMAQ…FLNKIKSMFN (89 aa)) is disordered. The segment covering 497–508 (QSEKSETRRKDQ) has biased composition (basic and acidic residues).

It localises to the mitochondrion outer membrane. Its function is as follows. May act as a tumor suppressor in larval imaginal disks. The sequence is that of DnaJ homolog l(2)tid, mitochondrial (l(2)tid) from Drosophila virilis (Fruit fly).